Here is a 732-residue protein sequence, read N- to C-terminus: Catalase-peroxidase (732 aa).

Residues 97–220 constitute a cross-link (tryptophyl-tyrosyl-methioninium (Trp-Tyr) (with M-246)); the sequence is WHSAGTYRTS…LAAVQMGLIY (124 aa). The active-site Proton acceptor is the His98. Positions 220–246 form a cross-link, tryptophyl-tyrosyl-methioninium (Tyr-Met) (with W-97); that stretch reads YVNPEGPDGNPDPVAAGRDIRETFARM. Heme b is bound at residue His261.

Belongs to the peroxidase family. Peroxidase/catalase subfamily. In terms of assembly, homodimer or homotetramer. Requires heme b as cofactor. Formation of the three residue Trp-Tyr-Met cross-link is important for the catalase, but not the peroxidase activity of the enzyme.

The catalysed reaction is H2O2 + AH2 = A + 2 H2O. It catalyses the reaction 2 H2O2 = O2 + 2 H2O. Functionally, bifunctional enzyme with both catalase and broad-spectrum peroxidase activity. This chain is Catalase-peroxidase, found in Pelodictyon phaeoclathratiforme (strain DSM 5477 / BU-1).